A 217-amino-acid polypeptide reads, in one-letter code: NADPH-dependent 3-demethoxyubiquinone 3-hydroxylase, mitochondrial (217 aa).

The transit peptide at 1–34 (MSCARALAACCLWRLRTGALQPLSAYGRRISVRF) directs the protein to the mitochondrion. 2 repeat units span residues 48-129 (AVDR…TALL) and 130-217 (GKEG…SERL). Residues 48–217 (AVDRIIRVDH…KVAIYLSERL (170 aa)) are 2 X approximate tandem repeats. Arg-51 lines the NADH pocket. Residues Glu-60, Glu-90, His-93, Glu-142, Glu-178, and His-181 each coordinate Fe cation. Lys-208, Tyr-212, and Arg-216 together coordinate NADH.

It belongs to the COQ7 family. In terms of assembly, component of a multi-subunit COQ enzyme complex. Interacts with COQ8B and COQ6. Interacts with COQ9. Requires Fe cation as cofactor.

It is found in the mitochondrion inner membrane. The catalysed reaction is a 5-methoxy-2-methyl-3-(all-trans-polyprenyl)benzoquinone + NADH + O2 = a 3-demethylubiquinone + NAD(+) + H2O. It functions in the pathway cofactor biosynthesis; ubiquinone biosynthesis. Its function is as follows. Catalyzes the hydroxylation of the 5-methoxy-2-methyl-3-(all-trans-polyprenyl)benzoquinone at the C6 position and participates in the biosynthesis of ubiquinone. Catalyzes the reaction through a substrate-mediated reduction pathway, whereby NADH shuttles electrons to 5-methoxy-2-methyl-3-(all-trans-decaprenyl)benzoquinone, which then transfers the electrons to the two Fe(3+) centers. The binding of 5-methoxy-2-methyl-3-(all-trans-polyprenyl)benzoquinone (DMQn) mediates reduction of the diiron center by nicotinamide adenine dinucleotide (NADH) and initiates oxygen activation for subsequent DMQ hydroxylation. The physiological substrates are 5-methoxy-2-methyl-3-(all-trans-nonaprenyl)benzoquinone (DMQ(9)) and 5-methoxy-2-methyl-3-(all-trans-decaprenyl)benzoquinone (DMQ(10)), however in vitro the enzyme does not have any specificity concerning the length of the polyprenyl tail, and accepts tails of various lengths with similar efficiency. Also has a structural role in the COQ enzyme complex, stabilizing other COQ polypeptides. Involved in lifespan determination in a ubiquinone-independent manner. Plays a role in modulating mitochondrial stress responses, acting in the nucleus, perhaps via regulating gene expression, independent of its characterized mitochondrial function in ubiquinone biosynthesis. The sequence is that of NADPH-dependent 3-demethoxyubiquinone 3-hydroxylase, mitochondrial from Bos taurus (Bovine).